Consider the following 223-residue polypeptide: Uracil-DNA glycosylase (223 aa).

The Proton acceptor role is filled by D67.

It belongs to the uracil-DNA glycosylase (UDG) superfamily. UNG family.

The protein localises to the cytoplasm. It catalyses the reaction Hydrolyzes single-stranded DNA or mismatched double-stranded DNA and polynucleotides, releasing free uracil.. Its function is as follows. Excises uracil residues from the DNA which can arise as a result of misincorporation of dUMP residues by DNA polymerase or due to deamination of cytosine. This chain is Uracil-DNA glycosylase, found in Borrelia hermsii (strain HS1 / DAH).